The primary structure comprises 137 residues: uncharacterized protein (137 aa).

It belongs to the DCC thiol-disulfide oxidoreductase family.

This is an uncharacterized protein from Bacillus subtilis (strain 168).